The sequence spans 210 residues: Probable GTP-binding protein EngB (210 aa).

The EngB-type G domain maps to 25-199; sequence CGIEVAFAGR…RQKLDSWFSE (175 aa). Residues 33–40, 60–64, 78–81, 145–148, and 178–180 contribute to the GTP site; these read GRSNAGKS, GRTQL, DLPG, TKAD, and FSS. S40 and T62 together coordinate Mg(2+).

It belongs to the TRAFAC class TrmE-Era-EngA-EngB-Septin-like GTPase superfamily. EngB GTPase family. Mg(2+) serves as cofactor.

Necessary for normal cell division and for the maintenance of normal septation. The chain is Probable GTP-binding protein EngB from Salmonella agona (strain SL483).